Consider the following 778-residue polypeptide: Serine/threonine-protein kinase BRSK1 (778 aa).

A compositionally biased stretch (gly residues) spans 1–12 (MSSGSKEGGGGS). The segment at 1–29 (MSSGSKEGGGGSPAYHLPHPHPHPPQHAQ) is disordered. Positions 34–285 (YRLEKTLGKG…LEQIQKHPWY (252 aa)) constitute a Protein kinase domain. ATP-binding positions include 40–48 (LGKGQTGLV) and Lys-63. Asp-156 acts as the Proton acceptor in catalysis. Thr-189 bears the Phosphothreonine; by LKB1 mark. Position 193 is a phosphoserine (Ser-193). One can recognise a UBA domain in the interval 314 to 356 (ELDPDVLESMASLGCFRDRERLHRELRSEEENQEKMIYYLLLD). A compositionally biased stretch (basic and acidic residues) spans 362 to 383 (PSCEDQDLPPRNDVDPPRKRVD). Residues 362-548 (PSCEDQDLPP…SPGGGVGGAA (187 aa)) form a disordered region. Ser-399, Ser-443, Ser-447, and Ser-450 each carry phosphoserine. A compositionally biased stretch (low complexity) spans 430–457 (SRSVSGASTGLSSSPLSSPRSPVFSFSP). Omega-N-methylarginine occurs at positions 466, 481, 484, and 498. Residues 491 to 508 (QPPPPSARSTPLPGPPGS) are compositionally biased toward pro residues. Ser-508 is modified (phosphoserine). Positions 509–533 (PRSSGGTPLHSPLHTPRASPTGTPG) are enriched in low complexity. Arg-525 carries the omega-N-methylarginine modification. A phosphothreonine mark is found at Thr-529 and Thr-535. An Omega-N-methylarginine modification is found at Arg-550. Thr-583 carries the post-translational modification Phosphothreonine. Ser-586, Ser-587, and Ser-601 each carry phosphoserine. The tract at residues 719 to 778 (QPSVQALADEKNGAQTRPAGTPPRSLQPPPGRPDPDLSSSPRRGPSKDKKLLATNGTPLP) is disordered.

The protein belongs to the protein kinase superfamily. CAMK Ser/Thr protein kinase family. SNF1 subfamily. The cofactor is Mg(2+). Phosphorylated at Thr-189 by STK11/LKB1 in complex with STE20-related adapter-alpha (STRADA) pseudo kinase and CAB39. Not phosphorylated at Thr-189 by CaMKK2. In contrast, it is phosphorylated and activated by CaMKK1. May be inactivated via dephosphorylation of Thr-189 by PP2C. May be autophosphorylated. As to expression, mainly present in brain. Present in presynaptic nerve terminals (at protein level).

It localises to the cytoplasm. The protein localises to the nucleus. Its subcellular location is the cytoskeleton. The protein resides in the microtubule organizing center. It is found in the centrosome. It localises to the synapse. The protein localises to the presynaptic active zone. Its subcellular location is the cytoplasmic vesicle. The protein resides in the secretory vesicle. It is found in the synaptic vesicle. The enzyme catalyses L-seryl-[protein] + ATP = O-phospho-L-seryl-[protein] + ADP + H(+). It carries out the reaction L-threonyl-[protein] + ATP = O-phospho-L-threonyl-[protein] + ADP + H(+). It catalyses the reaction L-seryl-[tau protein] + ATP = O-phospho-L-seryl-[tau protein] + ADP + H(+). The catalysed reaction is L-threonyl-[tau protein] + ATP = O-phospho-L-threonyl-[tau protein] + ADP + H(+). Its activity is regulated as follows. Activated by phosphorylation on Thr-189 by STK11/LKB1. Its function is as follows. Serine/threonine-protein kinase that plays a key role in polarization of neurons and centrosome duplication. Phosphorylates CDC25B, CDC25C, MAPT/TAU, RIMS1, TUBG1, TUBG2 and WEE1. Following phosphorylation and activation by STK11/LKB1, acts as a key regulator of polarization of cortical neurons, probably by mediating phosphorylation of microtubule-associated proteins such as MAPT/TAU at 'Thr-523' and 'Ser-573'. Also regulates neuron polarization by mediating phosphorylation of WEE1 at 'Ser-642' in postmitotic neurons, leading to down-regulate WEE1 activity in polarized neurons. Also acts as a positive regulator of centrosome duplication by mediating phosphorylation of gamma-tubulin (TUBG1 and TUBG2) at 'Ser-131', leading to translocation of gamma-tubulin and its associated proteins to the centrosome. Involved in the UV-induced DNA damage checkpoint response, probably by inhibiting CDK1 activity through phosphorylation and activation of WEE1, and inhibition of CDC25B and CDC25C. In neurons, localizes to synaptic vesicles and plays a role in neurotransmitter release, possibly by phosphorylating RIMS1. This chain is Serine/threonine-protein kinase BRSK1 (Brsk1), found in Rattus norvegicus (Rat).